The following is a 169-amino-acid chain: Putative tRNA (cytidine(34)-2'-O)-methyltransferase (169 aa).

Residues isoleucine 79, glycine 104, isoleucine 125, and serine 133 each contribute to the S-adenosyl-L-methionine site.

It belongs to the class IV-like SAM-binding methyltransferase superfamily. RNA methyltransferase TrmH family. TrmL subfamily.

The protein resides in the cytoplasm. It carries out the reaction cytidine(34) in tRNA + S-adenosyl-L-methionine = 2'-O-methylcytidine(34) in tRNA + S-adenosyl-L-homocysteine + H(+). The enzyme catalyses 5-carboxymethylaminomethyluridine(34) in tRNA(Leu) + S-adenosyl-L-methionine = 5-carboxymethylaminomethyl-2'-O-methyluridine(34) in tRNA(Leu) + S-adenosyl-L-homocysteine + H(+). Could methylate the ribose at the nucleotide 34 wobble position in tRNA. In Listeria monocytogenes serotype 4b (strain F2365), this protein is Putative tRNA (cytidine(34)-2'-O)-methyltransferase.